Here is a 112-residue protein sequence, read N- to C-terminus: Nitrogen regulatory protein P-II (112 aa).

O-UMP-tyrosine is present on Tyr-51.

This sequence belongs to the P(II) protein family. Homotrimer.

Functionally, in nitrogen-limiting conditions, when the ratio of Gln to 2-ketoglutarate decreases, P-II is uridylylated to P-II-UMP. P-II-UMP allows the deadenylation of glutamine synthetase (GS), thus activating the enzyme. Conversely, in nitrogen excess P-II is deuridylated and promotes the adenylation of GS. P-II indirectly controls the transcription of the GS gene (glnA). P-II prevents NR-II-catalyzed conversion of NR-I to NR-I-phosphate, the transcriptional activator of glnA. When P-II is uridylylated to P-II-UMP, these events are reversed. In Azospirillum brasilense, this protein is Nitrogen regulatory protein P-II (glnB).